Consider the following 461-residue polypeptide: GTPase Era, mitochondrial (461 aa).

Residues 1–35 (MAAPWLQRWRGAYAGPSGPLRLVRLHGVQRSSWRA) constitute a mitochondrion transit peptide. The tract at residues 39 to 73 (AAGAFGAGPHPGPPQRAANPGPGPHPPPVATSREK) is disordered. The region spanning 89 to 354 (KVLRISIIGA…QYLLMQAKPG (266 aa)) is the Era-type G domain. The interval 97 to 104 (GAPNSGKS) is G1. 97–104 (GAPNSGKS) lines the GTP pocket. Residues 123-127 (HTTRC) form a G2 region. Residues 144–147 (DTPG) form a G3 region. GTP contacts are provided by residues 144 to 148 (DTPGL) and 213 to 216 (NKVD). The segment at 213-216 (NKVD) is G4. The disordered stretch occupies residues 260–319 (KVTQTPPPENRARESPCQLETDKAQEGSSLDNSSDVKASESSLDTEAREQKPYKYGDQKN). Residues 269–284 (NRARESPCQLETDKAQ) are compositionally biased toward basic and acidic residues. The span at 285–303 (EGSSLDNSSDVKASESSLD) shows a compositional bias: polar residues. A compositionally biased stretch (basic and acidic residues) spans 304–319 (TEAREQKPYKYGDQKN). Residues 332–334 (LAA) are G5. In terms of domain architecture, KH type-2 spans 380–461 (ILEYLPLEVP…RLKLKVEVKS (82 aa)).

Belongs to the TRAFAC class TrmE-Era-EngA-EngB-Septin-like GTPase superfamily. Era GTPase family.

The protein resides in the mitochondrion matrix. Its subcellular location is the mitochondrion inner membrane. Functionally, probable GTPase that plays a role in the mitochondrial ribosomal small subunit assembly. Specifically binds the 12S mitochondrial rRNA (12S mt-rRNA) to a 33 nucleotide section delineating the 3' terminal stem-loop region. May act as a chaperone that protects the 12S mt-rRNA on the 28S mitoribosomal subunit during ribosomal small subunit assembly. This is GTPase Era, mitochondrial (ERAL1) from Gallus gallus (Chicken).